The chain runs to 387 residues: Low specificity L-threonine aldolase (387 aa).

Lys-213 bears the N6-(pyridoxal phosphate)lysine mark. A Glycyl lysine isopeptide (Lys-Gly) (interchain with G-Cter in ubiquitin) cross-link involves residue Lys-228. 2 positions are modified to phosphoserine: Ser-367 and Ser-369. Residue Thr-370 is modified to Phosphothreonine.

The protein belongs to the threonine aldolase family. As to quaternary structure, homotetramer. Requires pyridoxal 5'-phosphate as cofactor.

It carries out the reaction L-threonine = acetaldehyde + glycine. It catalyses the reaction L-allo-threonine = acetaldehyde + glycine. Its pathway is amino-acid biosynthesis; glycine biosynthesis; glycine from L-allo-threonine: step 1/1. It participates in amino-acid degradation; L-threonine degradation via aldolase pathway; acetaldehyde and glycine from L-threonine: step 1/1. Its function is as follows. Catalyzes the cleavage of L-allo-threonine and L-threonine to glycine and acetaldehyde. The protein is Low specificity L-threonine aldolase (GLY1) of Saccharomyces cerevisiae (strain ATCC 204508 / S288c) (Baker's yeast).